A 619-amino-acid chain; its full sequence is Dihydroxy-acid dehydratase (619 aa).

Aspartate 81 provides a ligand contact to Mg(2+). Cysteine 122 serves as a coordination point for [2Fe-2S] cluster. The Mg(2+) site is built by aspartate 123 and lysine 124. Position 124 is an N6-carboxylysine (lysine 124). Cysteine 195 lines the [2Fe-2S] cluster pocket. Position 494 (glutamate 494) interacts with Mg(2+). Serine 520 functions as the Proton acceptor in the catalytic mechanism.

Belongs to the IlvD/Edd family. Homodimer. The cofactor is [2Fe-2S] cluster. Mg(2+) serves as cofactor.

It catalyses the reaction (2R)-2,3-dihydroxy-3-methylbutanoate = 3-methyl-2-oxobutanoate + H2O. The catalysed reaction is (2R,3R)-2,3-dihydroxy-3-methylpentanoate = (S)-3-methyl-2-oxopentanoate + H2O. It functions in the pathway amino-acid biosynthesis; L-isoleucine biosynthesis; L-isoleucine from 2-oxobutanoate: step 3/4. Its pathway is amino-acid biosynthesis; L-valine biosynthesis; L-valine from pyruvate: step 3/4. Its function is as follows. Functions in the biosynthesis of branched-chain amino acids. Catalyzes the dehydration of (2R,3R)-2,3-dihydroxy-3-methylpentanoate (2,3-dihydroxy-3-methylvalerate) into 2-oxo-3-methylpentanoate (2-oxo-3-methylvalerate) and of (2R)-2,3-dihydroxy-3-methylbutanoate (2,3-dihydroxyisovalerate) into 2-oxo-3-methylbutanoate (2-oxoisovalerate), the penultimate precursor to L-isoleucine and L-valine, respectively. The chain is Dihydroxy-acid dehydratase from Shewanella sp. (strain MR-4).